Here is a 578-residue protein sequence, read N- to C-terminus: Putative multidrug export ATP-binding/permease protein SAB1799c (578 aa).

The Cytoplasmic portion of the chain corresponds to 1–15 (MIKRYLQFVKPYKYR). Residues 16–36 (IFATIIVGIIKFGIPMLIPLL) traverse the membrane as a helical segment. Positions 16-306 (IFATIIVGII…LVASFTTLTQ (291 aa)) constitute an ABC transmembrane type-1 domain. Over 37–59 (IKYAIDGVINNHALTTDEKVHHL) the chain is Extracellular. A helical membrane pass occupies residues 60–80 (TIAIGIALFIFVIVRPPIEFI). Topologically, residues 81 to 138 (RQYLAQWTSNKILYDIRKKLYNHLQALSARFYANNQVGQVISRVINDVEQTKDFILTG) are cytoplasmic. The helical transmembrane segment at 139–159 (LMNIWLDCITIIIALSIMFFL) threads the bilayer. Residues 160–162 (DVK) are Extracellular-facing. Residues 163–183 (LTLAALFIFPFYILTVYVFFG) traverse the membrane as a helical segment. At 184–242 (RLRKLTRERSQALAEVQGFLHERVQGISVVKSFAIEDNEAKNFDKKNANFLTRALKHTR) the chain is on the cytoplasmic side. Residues 243–262 (WNAYSFATINTVTDIGPIIV) traverse the membrane as a helical segment. Residues 263 to 267 (IGVGA) are Extracellular-facing. A helical transmembrane segment spans residues 268-287 (YLAISGSITVGTLAAFVGYL). Topologically, residues 288 to 578 (ELLFGPLRRL…YEHLYSIQNL (291 aa)) are cytoplasmic. The 236-residue stretch at 340–575 (IDIYHVNFQY…QGAYEHLYSI (236 aa)) folds into the ABC transporter domain. 374–381 (GMSGGGKS) contributes to the ATP binding site.

This sequence belongs to the ABC transporter superfamily. Homodimer.

Its subcellular location is the cell membrane. In terms of biological role, may be involved in multidrug export. Transmembrane domains (TMD) form a pore in the cell membrane and the ATP-binding domain (NBD) is responsible for energy generation. The chain is Putative multidrug export ATP-binding/permease protein SAB1799c from Staphylococcus aureus (strain bovine RF122 / ET3-1).